The chain runs to 390 residues: GTPase Obg (390 aa).

Residues 1 to 159 (MKFVDEASIL…RDLMLELMLL (159 aa)) form the Obg domain. The disordered stretch occupies residues 127–147 (NTRFKSSVNRTPRQKTMGTPG). A compositionally biased stretch (polar residues) spans 129–143 (RFKSSVNRTPRQKTM). One can recognise an OBG-type G domain in the interval 160–333 (ADVGMLGMPN…LCWDVMTFII (174 aa)). GTP-binding positions include 166–173 (GMPNAGKS), 191–195 (FTTLV), 213–216 (DIPG), 283–286 (NKID), and 314–316 (SAA). Residues S173 and T193 each coordinate Mg(2+).

It belongs to the TRAFAC class OBG-HflX-like GTPase superfamily. OBG GTPase family. In terms of assembly, monomer. The cofactor is Mg(2+).

Its subcellular location is the cytoplasm. Its function is as follows. An essential GTPase which binds GTP, GDP and possibly (p)ppGpp with moderate affinity, with high nucleotide exchange rates and a fairly low GTP hydrolysis rate. Plays a role in control of the cell cycle, stress response, ribosome biogenesis and in those bacteria that undergo differentiation, in morphogenesis control. This Citrobacter koseri (strain ATCC BAA-895 / CDC 4225-83 / SGSC4696) protein is GTPase Obg.